A 285-amino-acid polypeptide reads, in one-letter code: Shikimate dehydrogenase (NADP(+)) (285 aa).

Residues 20-22 and Thr67 contribute to the shikimate site; that span reads SRS. The active-site Proton acceptor is the Lys71. Shikimate-binding residues include Asn93 and Asp108. Residues 132-136 and Met224 each bind NADP(+); that span reads GAGGA. Tyr226 contacts shikimate. Residue Gly248 participates in NADP(+) binding.

It belongs to the shikimate dehydrogenase family. As to quaternary structure, homodimer.

It catalyses the reaction shikimate + NADP(+) = 3-dehydroshikimate + NADPH + H(+). It participates in metabolic intermediate biosynthesis; chorismate biosynthesis; chorismate from D-erythrose 4-phosphate and phosphoenolpyruvate: step 4/7. Involved in the biosynthesis of the chorismate, which leads to the biosynthesis of aromatic amino acids. Catalyzes the reversible NADPH linked reduction of 3-dehydroshikimate (DHSA) to yield shikimate (SA). In Bordetella avium (strain 197N), this protein is Shikimate dehydrogenase (NADP(+)).